We begin with the raw amino-acid sequence, 90 residues long: Small ribosomal subunit protein uS19 (90 aa).

It belongs to the universal ribosomal protein uS19 family.

In terms of biological role, protein S19 forms a complex with S13 that binds strongly to the 16S ribosomal RNA. The sequence is that of Small ribosomal subunit protein uS19 from Thioalkalivibrio sulfidiphilus (strain HL-EbGR7).